We begin with the raw amino-acid sequence, 114 residues long: Nucleoid-associated protein NT01CX_0824 (114 aa).

It belongs to the YbaB/EbfC family. As to quaternary structure, homodimer.

It is found in the cytoplasm. It localises to the nucleoid. Functionally, binds to DNA and alters its conformation. May be involved in regulation of gene expression, nucleoid organization and DNA protection. This chain is Nucleoid-associated protein NT01CX_0824, found in Clostridium novyi (strain NT).